The chain runs to 194 residues: Early growth response protein 1 (194 aa).

C2H2-type zinc fingers lie at residues 1–18 (CDRRFSRSDELTRHIRIH), 24–46 (FQCRICMRNFSRSDHLTTHIRTH), and 52–74 (FACDICGRKFARSDERKRHTKIH).

This sequence belongs to the EGR C2H2-type zinc-finger protein family.

The protein resides in the nucleus. Its subcellular location is the cytoplasm. Transcriptional regulator. Recognizes and binds to the DNA sequence 5'-GCG(T/G)GGGCG-3'(EGR-site) in the promoter region of target genes. Binds double-stranded target DNA, irrespective of the cytosine methylation status. Regulates the transcription of numerous target genes, and thereby plays an important role in regulating the response to growth factors, DNA damage, and ischemia. Plays a role in the regulation of cell survival, proliferation and cell death. Mediates responses to ischemia and hypoxia; regulates the expression of proteins that are involved in inflammatory processes. Plays a role in regulating the expression of circadian clock genes. The polypeptide is Early growth response protein 1 (EGR1) (Gallus gallus (Chicken)).